Reading from the N-terminus, the 800-residue chain is Nucleolar complex protein 3 homolog (800 aa).

Disordered stretches follow at residues 27–93 and 160–187; these read KLKN…DMMD and GIIP…RELE. Residues 40–51 are compositionally biased toward basic residues; sequence KKYRKEQRKLRQ. Positions 66–78 are enriched in basic and acidic residues; that stretch reads NPKEKRPGKRIER. Positions 79 to 93 are enriched in acidic residues; the sequence is EEEEEEEALPLDMMD. Over residues 160-174 the composition is skewed to basic and acidic residues; the sequence is GIIPQTREKPVTDSN. Residues 175 to 187 are compositionally biased toward acidic residues; the sequence is KDEEDQEEERELE. Residue Lys-333 forms a Glycyl lysine isopeptide (Lys-Gly) (interchain with G-Cter in SUMO2) linkage. A coiled-coil region spans residues 451–490; it reads KEKRKSLSRMQRKWKKAEEKLERELREAEASESTEKKLKL. The residue at position 787 (Ser-787) is a Phosphoserine.

The protein belongs to the CBF/MAK21 family. In terms of tissue distribution, expressed in colon, heart, kidney, liver, lung, placenta, skeletal muscle, small intestine, spleen and thymus.

Its subcellular location is the nucleus. The protein localises to the nucleolus. It localises to the nucleus speckle. May be required for adipogenesis. The chain is Nucleolar complex protein 3 homolog (NOC3L) from Homo sapiens (Human).